A 215-amino-acid polypeptide reads, in one-letter code: UPF0056 membrane protein bbp_248 (215 aa).

A run of 6 helical transmembrane segments spans residues 10-32, 52-74, 78-100, 119-141, 151-169, and 190-207; these read IYISFFFSLFALVNPIGMIPIFT, FSVAIILSISLIFGSFILNLFGI, SFRISGGILVMIIAISMINGNFI, ISIVPLAMPLIAGPGAISSTIVW, IFGCMVTIMLFSCFCWTLF, and IMGLLLMSLGIEFILAGL.

This sequence belongs to the UPF0056 (MarC) family.

The protein localises to the cell membrane. The polypeptide is UPF0056 membrane protein bbp_248 (Buchnera aphidicola subsp. Baizongia pistaciae (strain Bp)).